Here is a 303-residue protein sequence, read N- to C-terminus: Protein-lysine N-methyltransferase rrg1 (303 aa).

S-adenosyl-L-methionine is bound by residues Trp117, 143–145 (GAG), Asp165, Trp198, and Ser221.

It belongs to the class I-like SAM-binding methyltransferase superfamily. METTL21 family.

It localises to the cytoplasm. The protein localises to the nucleus. S-adenosyl-L-methionine-dependent protein-lysine N-methyltransferase that methylates elongation factor 2 and elongation factor 3A. This Schizosaccharomyces pombe (strain 972 / ATCC 24843) (Fission yeast) protein is Protein-lysine N-methyltransferase rrg1.